Reading from the N-terminus, the 123-residue chain is Small ribosomal subunit protein uS12 (123 aa).

The disordered stretch occupies residues 1–22 (MATINQLVRQPRKRSVEKSDVP). Residue D89 is modified to 3-methylthioaspartic acid. The disordered stretch occupies residues 100–123 (GSLDTSGVKGRNQGRSKYGTKRPK). A compositionally biased stretch (basic residues) spans 111 to 123 (NQGRSKYGTKRPK).

Belongs to the universal ribosomal protein uS12 family. As to quaternary structure, part of the 30S ribosomal subunit. Contacts proteins S8 and S17. May interact with IF1 in the 30S initiation complex.

Functionally, with S4 and S5 plays an important role in translational accuracy. Interacts with and stabilizes bases of the 16S rRNA that are involved in tRNA selection in the A site and with the mRNA backbone. Located at the interface of the 30S and 50S subunits, it traverses the body of the 30S subunit contacting proteins on the other side and probably holding the rRNA structure together. The combined cluster of proteins S8, S12 and S17 appears to hold together the shoulder and platform of the 30S subunit. In Pseudomonas entomophila (strain L48), this protein is Small ribosomal subunit protein uS12.